A 274-amino-acid chain; its full sequence is Putative pyruvate, phosphate dikinase regulatory protein (274 aa).

153–160 is a binding site for ADP; the sequence is GISRTSKT.

It belongs to the pyruvate, phosphate/water dikinase regulatory protein family. PDRP subfamily.

The catalysed reaction is N(tele)-phospho-L-histidyl/L-threonyl-[pyruvate, phosphate dikinase] + ADP = N(tele)-phospho-L-histidyl/O-phospho-L-threonyl-[pyruvate, phosphate dikinase] + AMP + H(+). It catalyses the reaction N(tele)-phospho-L-histidyl/O-phospho-L-threonyl-[pyruvate, phosphate dikinase] + phosphate + H(+) = N(tele)-phospho-L-histidyl/L-threonyl-[pyruvate, phosphate dikinase] + diphosphate. Its function is as follows. Bifunctional serine/threonine kinase and phosphorylase involved in the regulation of the pyruvate, phosphate dikinase (PPDK) by catalyzing its phosphorylation/dephosphorylation. The sequence is that of Putative pyruvate, phosphate dikinase regulatory protein from Bartonella tribocorum (strain CIP 105476 / IBS 506).